A 285-amino-acid polypeptide reads, in one-letter code: Ribose-phosphate pyrophosphokinase (285 aa).

Residues 34–36 (DGE) and 91–92 (RQ) each bind ATP. Residues His124 and Asp162 each contribute to the Mg(2+) site. Residue Lys185 is part of the active site. D-ribose 5-phosphate is bound by residues Arg187, Asp211, and 215–219 (STGGT).

It belongs to the ribose-phosphate pyrophosphokinase family. Class III (archaeal) subfamily. Mg(2+) is required as a cofactor.

The protein localises to the cytoplasm. It catalyses the reaction D-ribose 5-phosphate + ATP = 5-phospho-alpha-D-ribose 1-diphosphate + AMP + H(+). It functions in the pathway metabolic intermediate biosynthesis; 5-phospho-alpha-D-ribose 1-diphosphate biosynthesis; 5-phospho-alpha-D-ribose 1-diphosphate from D-ribose 5-phosphate (route I): step 1/1. Its function is as follows. Involved in the biosynthesis of the central metabolite phospho-alpha-D-ribosyl-1-pyrophosphate (PRPP) via the transfer of pyrophosphoryl group from ATP to 1-hydroxyl of ribose-5-phosphate (Rib-5-P). This chain is Ribose-phosphate pyrophosphokinase, found in Pyrococcus abyssi (strain GE5 / Orsay).